Consider the following 389-residue polypeptide: Aromatic-amino-acid aminotransferase 2 (389 aa).

K233 is modified (N6-(pyridoxal phosphate)lysine).

The protein belongs to the class-I pyridoxal-phosphate-dependent aminotransferase family. Homodimer. It depends on pyridoxal 5'-phosphate as a cofactor.

It carries out the reaction an aromatic L-alpha-amino acid + 2-oxoglutarate = an aromatic oxo-acid + L-glutamate. In terms of biological role, catalyzes the transamination of phenylalanine, tyrosine and tryptophan. Shows virtually no activity towards aspartic acid, alanine, valine or isoleucine. This is Aromatic-amino-acid aminotransferase 2 from Thermococcus litoralis (strain ATCC 51850 / DSM 5473 / JCM 8560 / NS-C).